The primary structure comprises 481 residues: O-phosphoseryl-tRNA(Sec) selenium transferase (481 aa).

Residues 1-36 form a tetramerization region; sequence MKANFGKKEGEYSRLVSKSSNKLLNSLWEKKQIPEE. Arg-69 is a pyridoxal 5'-phosphate binding site. The segment at 90–100 is phosphate loop (P-loop); sequence GRSGNLLEIQP. Residues Arg-91, Ser-92, and Gln-99 each coordinate substrate. Lys-277 bears the N6-(pyridoxal phosphate)lysine mark. Substrate is bound at residue Arg-306.

It belongs to the SepSecS family. In terms of assembly, homotetramer formed by a catalytic dimer and a non-catalytic dimer serving as a binding platform that orients tRNASec for catalysis. Each tetramer binds the CCA ends of two tRNAs which point to the active sites of the catalytic dimer. Pyridoxal 5'-phosphate is required as a cofactor.

The protein resides in the cytoplasm. It carries out the reaction O-phospho-L-seryl-tRNA(Sec) + selenophosphate + H2O = L-selenocysteinyl-tRNA(Sec) + 2 phosphate. It functions in the pathway aminoacyl-tRNA biosynthesis; selenocysteinyl-tRNA(Sec) biosynthesis; selenocysteinyl-tRNA(Sec) from L-seryl-tRNA(Sec) (archaeal/eukaryal route): step 2/2. In terms of biological role, converts O-phosphoseryl-tRNA(Sec) to selenocysteinyl-tRNA(Sec) required for selenoprotein biosynthesis. The sequence is that of O-phosphoseryl-tRNA(Sec) selenium transferase (secs-1) from Caenorhabditis elegans.